The sequence spans 239 residues: tRNA (guanine-N(1)-)-methyltransferase (239 aa).

Residues G108 and 127–132 (LGDFVL) each bind S-adenosyl-L-methionine.

The protein belongs to the RNA methyltransferase TrmD family. In terms of assembly, homodimer.

It localises to the cytoplasm. The enzyme catalyses guanosine(37) in tRNA + S-adenosyl-L-methionine = N(1)-methylguanosine(37) in tRNA + S-adenosyl-L-homocysteine + H(+). Functionally, specifically methylates guanosine-37 in various tRNAs. The polypeptide is tRNA (guanine-N(1)-)-methyltransferase (Streptococcus thermophilus (strain ATCC BAA-250 / LMG 18311)).